A 379-amino-acid polypeptide reads, in one-letter code: MTIIRKSHPLSKIVNHAFIDLPTPPNISGWWNFGSLLGMCLVLQIFTGLFLAMHYTSDTLTAFSSVTHICRDVNHGWLIRYMHANGASLFFICLYIHIGRGIYYGSYLYKETWNIGILLLFLTMATAFVGYVLPXGXMSFWGATVITNLLSAIPYIGQDLVEWIWGGFSVDKATLTRFFAFHFILPFIIAALATVHLLFLHETGSNNPLGIPSDXAKIPFHPYYTTKDFLGALIXIMFFMTLVLYFPXXLGDPDNYTPANPLNTPPHIKPEWYFLFAYAILRSIPNKLGGVVALILSILVLALLPYIHTSNQRSMMFRPISQFLFWTLVSDLLLLTWIGGQPVEPPFIIIGQTASXMYFTIILIXMXLAGLIXNKXLKW.

4 helical membrane passes run 33–53, 77–98, 113–133, and 178–198; these read FGSL…FLAM, WLIR…YIHI, WNIG…GYVL, and FFAF…VHLL. Heme b is bound by residues His83 and His97. Residues His182 and His196 each contribute to the heme b site. His201 is an a ubiquinone binding site. 4 helical membrane-spanning segments follow: residues 226-246, 288-308, 320-340, and 347-367; these read TKDF…VLYF, LGGV…PYIH, ISQF…WIGG, and FIII…IXMX.

This sequence belongs to the cytochrome b family. As to quaternary structure, the cytochrome bc1 complex contains 11 subunits: 3 respiratory subunits (MT-CYB, CYC1 and UQCRFS1), 2 core proteins (UQCRC1 and UQCRC2) and 6 low-molecular weight proteins (UQCRH/QCR6, UQCRB/QCR7, UQCRQ/QCR8, UQCR10/QCR9, UQCR11/QCR10 and a cleavage product of UQCRFS1). This cytochrome bc1 complex then forms a dimer. It depends on heme b as a cofactor.

The protein localises to the mitochondrion inner membrane. Component of the ubiquinol-cytochrome c reductase complex (complex III or cytochrome b-c1 complex) that is part of the mitochondrial respiratory chain. The b-c1 complex mediates electron transfer from ubiquinol to cytochrome c. Contributes to the generation of a proton gradient across the mitochondrial membrane that is then used for ATP synthesis. This is Cytochrome b (MT-CYB) from Thomomys umbrinus (Southern pocket gopher).